The sequence spans 356 residues: Sporulation minus regulator 1 (356 aa).

Residues 183–199 mediate DNA binding; the sequence is HPLRQLPGNPWHKFFGN.

This sequence to N.crassa mta-2.

It localises to the nucleus. Transcriptional activator that is required for post-fertilization events. It is required for the developmental events that occur in the female organ after fertilization. The sequence is that of Sporulation minus regulator 1 (SMR1) from Podospora anserina (Pleurage anserina).